We begin with the raw amino-acid sequence, 150 residues long: Ribosome-binding factor A (150 aa).

The disordered stretch occupies residues 126–150 (EVARDLSHDDDEDGGADEAPRNGDE).

The protein belongs to the RbfA family. As to quaternary structure, monomer. Binds 30S ribosomal subunits, but not 50S ribosomal subunits or 70S ribosomes.

It is found in the cytoplasm. Its function is as follows. One of several proteins that assist in the late maturation steps of the functional core of the 30S ribosomal subunit. Associates with free 30S ribosomal subunits (but not with 30S subunits that are part of 70S ribosomes or polysomes). Required for efficient processing of 16S rRNA. May interact with the 5'-terminal helix region of 16S rRNA. The protein is Ribosome-binding factor A of Brucella suis (strain ATCC 23445 / NCTC 10510).